We begin with the raw amino-acid sequence, 104 residues long: SPbeta prophage-derived stress response protein SCP1 (104 aa).

It is found in the cytoplasm. The polypeptide is SPbeta prophage-derived stress response protein SCP1 (yorD) (Bacillus subtilis (strain 168)).